A 401-amino-acid polypeptide reads, in one-letter code: Imidazolonepropionase (401 aa).

2 residues coordinate Fe(3+): His-66 and His-68. Zn(2+)-binding residues include His-66 and His-68. The 4-imidazolone-5-propanoate site is built by Arg-75, Tyr-138, and His-171. Tyr-138 serves as a coordination point for N-formimidoyl-L-glutamate. His-236 lines the Fe(3+) pocket. His-236 contributes to the Zn(2+) binding site. Gln-239 contributes to the 4-imidazolone-5-propanoate binding site. Asp-311 lines the Fe(3+) pocket. Asp-311 is a binding site for Zn(2+). Residues Asn-313 and Gly-315 each coordinate N-formimidoyl-L-glutamate. 4-imidazolone-5-propanoate is bound at residue Thr-316.

Belongs to the metallo-dependent hydrolases superfamily. HutI family. It depends on Zn(2+) as a cofactor. Fe(3+) serves as cofactor.

It localises to the cytoplasm. The enzyme catalyses 4-imidazolone-5-propanoate + H2O = N-formimidoyl-L-glutamate. It functions in the pathway amino-acid degradation; L-histidine degradation into L-glutamate; N-formimidoyl-L-glutamate from L-histidine: step 3/3. Its function is as follows. Catalyzes the hydrolytic cleavage of the carbon-nitrogen bond in imidazolone-5-propanoate to yield N-formimidoyl-L-glutamate. It is the third step in the universal histidine degradation pathway. The chain is Imidazolonepropionase from Pseudomonas putida (strain GB-1).